The chain runs to 450 residues: MAQFFKPQKRNKSVSKTLKGQVSALDHQARAVVRAAVKGQSTRFIMGALPGEVIEYKTAGKHSGHLERILEPSSDRREVPCEYYASCGGCDFQHIDEQKQLAHKRQVVEELFQKFGVFNPQTSSLPWQEPLVSEPMRYRRRVRLATRWLGKEQKLLIGFREAQSHHIVPIEDCLVADEILLHCVNTLYPLLNTSTVASKLGHIEAINTNTPVILLRITEALPGDAMQALQEWQTVNKTNIWLQSENDLQPLAGAAMPFDTSIDGDKLYFQPGDFLQVNGGINQRMVQQAMDWLKPEKTQRVYDFFAGIGNFSLPLARRAQSVLAVEGVYRMAEQTRINAESNGMDNLSSLSADLNEITASDLGKPADLWCLDPARPGAEGVVKLLHKLKPEHRPQRILYVSCAPDTLARDIAGMLTESKGCNYRIIGLSTVDMFPQTHHIETMVCLERAS.

The [4Fe-4S] cluster site is built by C81, C87, C90, and C173. S-adenosyl-L-methionine-binding residues include Q276, F305, N310, E326, D353, and D372. Residue C402 is the Nucleophile of the active site.

The protein belongs to the class I-like SAM-binding methyltransferase superfamily. RNA M5U methyltransferase family. RlmD subfamily.

The catalysed reaction is uridine(1939) in 23S rRNA + S-adenosyl-L-methionine = 5-methyluridine(1939) in 23S rRNA + S-adenosyl-L-homocysteine + H(+). Catalyzes the formation of 5-methyl-uridine at position 1939 (m5U1939) in 23S rRNA. This Idiomarina loihiensis (strain ATCC BAA-735 / DSM 15497 / L2-TR) protein is 23S rRNA (uracil(1939)-C(5))-methyltransferase RlmD.